The chain runs to 327 residues: Interleukin-12 subunit beta (327 aa).

Residues 1 to 22 (MHPQQLVVSWFSLVLLASPIVA) form the signal peptide. Positions 23-106 (IWELEKNVYI…LSRSLLLLHK (84 aa)) constitute an Ig-like C2-type domain. Cys50 and Cys90 are joined by a disulfide. Asn223 carries an N-linked (GlcNAc...) asparagine glycan. The Fibronectin type-III domain occupies 238 to 327 (PPKNLQLRPL…WSEWASVSCS (90 aa)).

This sequence belongs to the IL-12B family. Heterodimer with IL12A; disulfide-linked. The heterodimer is known as interleukin IL-12. Heterodimer with IL23A; disulfide-linked. The heterodimer is known as interleukin IL-23. Also secreted as a monomer. Interacts with NBR1; this interaction promotes IL-12 secretion.

It is found in the secreted. Functionally, cytokine that can act as a growth factor for activated T and NK cells, enhance the lytic activity of NK/lymphokine-activated killer cells, and stimulate the production of IFN-gamma by resting PBMC. This chain is Interleukin-12 subunit beta (IL12B), found in Bubalus carabanensis (Swamp type water buffalo).